We begin with the raw amino-acid sequence, 434 residues long: Peptidase B (434 aa).

2 residues coordinate Mn(2+): lysine 198 and aspartate 203. Lysine 210 is a catalytic residue. Aspartate 221, aspartate 280, and glutamate 282 together coordinate Mn(2+). The active site involves arginine 284.

The protein belongs to the peptidase M17 family. In terms of assembly, homohexamer. Requires Mn(2+) as cofactor.

It is found in the cytoplasm. It catalyses the reaction Release of an N-terminal amino acid, Xaa, from a peptide or arylamide. Xaa is preferably Glu or Asp but may be other amino acids, including Leu, Met, His, Cys and Gln.. Its function is as follows. Probably plays an important role in intracellular peptide degradation. The chain is Peptidase B from Pasteurella multocida (strain Pm70).